Reading from the N-terminus, the 220-residue chain is MSNQQALVIFSGGQDSTTCLIQAIQTYGRENVQAITFQYGQRHAVELERARWIAQDLGIKQTVLDLSLMRQITHNALMDDTAAIETAENGVPNTFVDGRNALFLLYAAIYAKGQGIRHIIAGVCETDFSGYPDCRDVFVKSMNVTLNLAMDYDFQIHTPLMYLTKAQTWALADEMGALDYIREQTHTCYNGIVGGGCRECPSCILRERGLAEYLESKKAV.

10-20 (FSGGQDSTTCL) is an ATP binding site. Zn(2+)-binding residues include Cys-188, Cys-197, Cys-200, and Cys-203.

It belongs to the QueC family. Zn(2+) serves as cofactor.

The catalysed reaction is 7-carboxy-7-deazaguanine + NH4(+) + ATP = 7-cyano-7-deazaguanine + ADP + phosphate + H2O + H(+). The protein operates within purine metabolism; 7-cyano-7-deazaguanine biosynthesis. Functionally, catalyzes the ATP-dependent conversion of 7-carboxy-7-deazaguanine (CDG) to 7-cyano-7-deazaguanine (preQ(0)). This Neisseria meningitidis serogroup C (strain 053442) protein is 7-cyano-7-deazaguanine synthase.